The following is a 163-amino-acid chain: Nucleotide-binding protein Ava_2001 (163 aa).

It belongs to the YajQ family.

In terms of biological role, nucleotide-binding protein. The chain is Nucleotide-binding protein Ava_2001 from Trichormus variabilis (strain ATCC 29413 / PCC 7937) (Anabaena variabilis).